The chain runs to 305 residues: Alpha-N-acetylgalactosaminide alpha-2,6-sialyltransferase 3 (305 aa).

At 1–8 (MACILKRK) the chain is on the cytoplasmic side. A helical; Signal-anchor for type II membrane protein transmembrane segment spans residues 9 to 29 (PALAVSFIALCILLLAMRLAN). Topologically, residues 30-305 (DVTFPLLLNC…VFTHPNWTVS (276 aa)) are lumenal. A disulfide bridge connects residues C80 and C229. N-linked (GlcNAc...) asparagine glycans are attached at residues N239 and N301.

Belongs to the glycosyltransferase 29 family. As to expression, in adults it is highly expressed in spleen, followed by kidney and lesser in lung. Not found in liver and skeletal muscle. In newborns it is abundantly expressed in brain and kidney.

It localises to the golgi apparatus membrane. It catalyses the reaction an alpha-Neu5Ac-(2-&gt;3)-beta-D-Gal-(1-&gt;3)-D-GlcNAc derivative + CMP-N-acetyl-beta-neuraminate = an alpha-Neu5Ac-(2-&gt;3)-beta-D-Gal-(1-&gt;3)-[alpha-Neu5Ac-(2-&gt;6)]-D-GlcNAc derivative + CMP + H(+). It carries out the reaction a ganglioside GM1b + CMP-N-acetyl-beta-neuraminate = a ganglioside GD1alpha + CMP + H(+). The catalysed reaction is a ganglioside GM1b (d18:1(4E)) + CMP-N-acetyl-beta-neuraminate = a ganglioside GD1alpha (d18:1(4E)) + CMP + H(+). The enzyme catalyses a globoside MSGG + CMP-N-acetyl-beta-neuraminate = a globoside DSGG + CMP + H(+). It catalyses the reaction 3-O-[alpha-Neu5Ac-(2-&gt;3)-beta-D-Gal-(1-&gt;3)-alpha-D-GalNAc]-L-Ser-[protein] + CMP-N-acetyl-beta-neuraminate = a 3-O-{alpha-Neu5Ac-(2-&gt;3)-beta-D-Gal-(1-&gt;3)-[alpha-Neu5Ac-(2-&gt;6)]-alpha-D-GalNAc}-L-seryl-[protein] + CMP + H(+). It carries out the reaction 3-O-[alpha-Neu5Ac-(2-&gt;3)-beta-D-Gal-(1-&gt;3)-alpha-D-GalNAc]-L-Thr-[protein] + CMP-N-acetyl-beta-neuraminate = a 3-O-{alpha-Neu5Ac-(2-&gt;3)-beta-D-Gal-(1-&gt;3)-[alpha-Neu5Ac-(2-&gt;6)]-alpha-D-GalNAc}-L-threonyl-[protein] + CMP + H(+). It functions in the pathway protein modification; protein glycosylation. The protein operates within glycolipid biosynthesis. Functionally, transfers the sialyl group (N-acetyl-alpha-neuraminyl or NeuAc) from CMP-NeuAc to the GalNAc residue on the NeuAc-alpha-2,3-Gal-beta-1,3-GalNAc sequence of glycoproteins and glycolipids forming an alpha-2,6-linkage. Produces branched type disialyl structures by transfer of a sialyl group onto a GalNAc residue inside the backbone core chains. ST6GalNAcIII prefers glycolipids to glycoproteins, predominantly catalyzing the biosynthesis of ganglioside GD1alpha from GM1b. GD1alpha is a critical molecule in the communication and interaction between neuronal cells and their supportive cells, particularly in brain tissues, and functions as an adhesion molecule in the process of metastasis. Sialylation of glycoproteins or glycosphingolipids is very important in tumor development, neuronal development, nerve repair, immunological processes and regulation of hormone sensitivity. The polypeptide is Alpha-N-acetylgalactosaminide alpha-2,6-sialyltransferase 3 (St6galnac3) (Rattus norvegicus (Rat)).